The following is a 1357-amino-acid chain: DNA-directed RNA polymerase subunit beta (1357 aa).

Belongs to the RNA polymerase beta chain family. The RNAP catalytic core consists of 2 alpha, 1 beta, 1 beta' and 1 omega subunit. When a sigma factor is associated with the core the holoenzyme is formed, which can initiate transcription.

The catalysed reaction is RNA(n) + a ribonucleoside 5'-triphosphate = RNA(n+1) + diphosphate. In terms of biological role, DNA-dependent RNA polymerase catalyzes the transcription of DNA into RNA using the four ribonucleoside triphosphates as substrates. The polypeptide is DNA-directed RNA polymerase subunit beta (Pseudomonas aeruginosa (strain UCBPP-PA14)).